The following is a 125-amino-acid chain: Glycine cleavage system H protein (125 aa).

The Lipoyl-binding domain maps to 22–104 (SYVIGITDFA…YDTGWILKLE (83 aa)). The residue at position 63 (Lys63) is an N6-lipoyllysine.

This sequence belongs to the GcvH family. As to quaternary structure, the glycine cleavage system is composed of four proteins: P, T, L and H. (R)-lipoate serves as cofactor.

Functionally, the glycine cleavage system catalyzes the degradation of glycine. The H protein shuttles the methylamine group of glycine from the P protein to the T protein. In terms of biological role, is also involved in protein lipoylation via its role as an octanoyl/lipoyl carrier protein intermediate. This is Glycine cleavage system H protein from Listeria monocytogenes serotype 4a (strain HCC23).